The sequence spans 202 residues: Adenylyl-sulfate kinase (202 aa).

31–38 (GLSASGKS) contacts ATP. S105 functions as the Phosphoserine intermediate in the catalytic mechanism.

The protein belongs to the APS kinase family.

It catalyses the reaction adenosine 5'-phosphosulfate + ATP = 3'-phosphoadenylyl sulfate + ADP + H(+). Its pathway is sulfur metabolism; hydrogen sulfide biosynthesis; sulfite from sulfate: step 2/3. Functionally, catalyzes the synthesis of activated sulfate. In Saccharomyces cerevisiae (strain ATCC 204508 / S288c) (Baker's yeast), this protein is Adenylyl-sulfate kinase (MET14).